The sequence spans 688 residues: Beta-galactosidase BglY (688 aa).

Residue arginine 118 coordinates substrate. Cysteine 122 contributes to the Zn(2+) binding site. A substrate-binding site is contributed by asparagine 156. Glutamate 157 acts as the Proton donor in catalysis. Cysteine 162, cysteine 164, and cysteine 167 together coordinate Zn(2+). Glutamate 313 serves as the catalytic Nucleophile. Residues tryptophan 321 and 361 to 364 (EKFH) each bind substrate.

It belongs to the glycosyl hydrolase 42 family.

It catalyses the reaction Hydrolysis of terminal non-reducing beta-D-galactose residues in beta-D-galactosides.. With respect to regulation, ca(2+), Mg(2+) and EDTA have little effect on enzyme activity at 1-10 mM. Zn(2+) at 3, 5, 7 or 10 mM inhibits activity by 20%, 30%, 40% and 65%, respectively. Functionally, hydrolyzes o-nitrophenyl-beta-D-galactopyranoside (ONPG) and p-nitrophenyl-beta-D-fucopyranoside (PNPF), but not p-nitrophenyl-beta-D-glucopyranoside (PNPG), p-nitrophenyl-beta-D-xylopyranoside (PNPX) or p-nitrophenyl-beta-D-arabinopyranoside (PNPA). Also hydrolyzes lactose, including lactose in milk. This chain is Beta-galactosidase BglY (bglY), found in Alicyclobacillus acidocaldarius subsp. acidocaldarius (strain ATCC 27009 / DSM 446 / BCRC 14685 / JCM 5260 / KCTC 1825 / NBRC 15652 / NCIMB 11725 / NRRL B-14509 / 104-IA) (Bacillus acidocaldarius).